The chain runs to 397 residues: Acetate kinase (397 aa).

Asn8 contributes to the Mg(2+) binding site. Residue Lys15 participates in ATP binding. Arg89 contacts substrate. The active-site Proton donor/acceptor is the Asp146. Residues 206 to 210 (HLGNG), 281 to 283 (DLR), and 329 to 333 (GVGEN) contribute to the ATP site. Residue Glu382 participates in Mg(2+) binding.

It belongs to the acetokinase family. Homodimer. It depends on Mg(2+) as a cofactor. Requires Mn(2+) as cofactor.

The protein localises to the cytoplasm. It carries out the reaction acetate + ATP = acetyl phosphate + ADP. Its pathway is metabolic intermediate biosynthesis; acetyl-CoA biosynthesis; acetyl-CoA from acetate: step 1/2. Catalyzes the formation of acetyl phosphate from acetate and ATP. Can also catalyze the reverse reaction. This is Acetate kinase from Bacillus thuringiensis subsp. konkukian (strain 97-27).